We begin with the raw amino-acid sequence, 86 residues long: Large ribosomal subunit protein uL23 (86 aa).

This sequence belongs to the universal ribosomal protein uL23 family. As to quaternary structure, part of the 50S ribosomal subunit. Contacts protein L29.

Binds to 23S rRNA. One of the proteins that surrounds the polypeptide exit tunnel on the outside of the ribosome. The sequence is that of Large ribosomal subunit protein uL23 from Pyrococcus furiosus (strain ATCC 43587 / DSM 3638 / JCM 8422 / Vc1).